Consider the following 241-residue polypeptide: Transcription initiation factor TFIID subunit 14 (241 aa).

In terms of domain architecture, YEATS spans 1–137 (MTTVKRTVRL…PGLLKALTAT (137 aa)). The disordered stretch occupies residues 141 to 169 (PGYSDEGEEARKDKRKNESEVGAGKKKAK). Residues 149-159 (EARKDKRKNES) are compositionally biased toward basic and acidic residues.

Belongs to the TAF14 family. In terms of assembly, component of the fcp1/TFIIF/polII complex via interaction of tfg3 with both tfg1/TFIIF-alpha and tfg2/TFIIF-beta subunits. Component of the SWI/SNF global transcription activator complex composed of at least arp9, arp42, snf5, snf22, snf30, sbf59, sol1, ssr1, ssr2, ssr3, ssr4 and tfg3. Also interacts with the TATA-binding protein (TBP). Component of the mst2 complex composed of at least eaf6, mst2, nto1, pdp3, ptf1, ptf2 and tfg3.

Its subcellular location is the nucleus. The protein resides in the nucleoplasm. Its function is as follows. Functions as a component of the DNA-binding general transcription factor complex TFIID, and the RNA polymerase II associated general transcription factor complex TFIIF. Binding of TFIID to a promoter (with or without TATA element) is the initial step in preinitiation complex (PIC) formation. TFIID plays a key role in the regulation of gene expression by RNA polymerase II through different activities such as transcription activator interaction, core promoter recognition and selectivity, TFIIA and TFIIB interaction, facilitation of DNA opening and initiation of transcription. TFIIF is essential for the initiation of transcription by RNA polymerase II. TFIIF functions include the recruitment of RNA polymerase II to the promoter bound DNA-TBP-TFIIB complex, decreasing the affinity of RNA polymerase II for non-specific DNA, allowing for the subsequent recruitment of TFIIE and TFIIH, and facilitating RNA polymerase II elongation. The TAF14 subunit has stimulatory activity. Component of the SWI/SNF complex, an ATP-dependent chromatin remodeling complex, required for the positive and negative regulation of gene expression of a large number of genes. It changes chromatin structure by altering DNA-histone contacts within a nucleosome, leading eventually to a change in nucleosome position, thus facilitating or repressing binding of gene-specific transcription factors. Component of the mst2 complex which is a highly specific H3 lysine 14 (H3K14) acetyltransferase that functions together with gcn5 to regulate global levels of H3K14 acetylation (H3K14ac), critical for DNA damage checkpoint activation. This chain is Transcription initiation factor TFIID subunit 14 (tfg3), found in Schizosaccharomyces pombe (strain 972 / ATCC 24843) (Fission yeast).